The chain runs to 200 residues: ATP-dependent Clp protease proteolytic subunit (200 aa).

The Nucleophile role is filled by Ser-103. The active site involves His-128.

The protein belongs to the peptidase S14 family. Fourteen ClpP subunits assemble into 2 heptameric rings which stack back to back to give a disk-like structure with a central cavity, resembling the structure of eukaryotic proteasomes.

It is found in the cytoplasm. The catalysed reaction is Hydrolysis of proteins to small peptides in the presence of ATP and magnesium. alpha-casein is the usual test substrate. In the absence of ATP, only oligopeptides shorter than five residues are hydrolyzed (such as succinyl-Leu-Tyr-|-NHMec, and Leu-Tyr-Leu-|-Tyr-Trp, in which cleavage of the -Tyr-|-Leu- and -Tyr-|-Trp bonds also occurs).. In terms of biological role, cleaves peptides in various proteins in a process that requires ATP hydrolysis. Has a chymotrypsin-like activity. Plays a major role in the degradation of misfolded proteins. The protein is ATP-dependent Clp protease proteolytic subunit of Vibrio vulnificus (strain CMCP6).